The sequence spans 169 residues: Peptide deformylase (169 aa).

Residues Cys-91 and His-133 each contribute to the Fe cation site. The active site involves Glu-134. His-137 contributes to the Fe cation binding site.

Belongs to the polypeptide deformylase family. Requires Fe(2+) as cofactor.

The catalysed reaction is N-terminal N-formyl-L-methionyl-[peptide] + H2O = N-terminal L-methionyl-[peptide] + formate. Removes the formyl group from the N-terminal Met of newly synthesized proteins. Requires at least a dipeptide for an efficient rate of reaction. N-terminal L-methionine is a prerequisite for activity but the enzyme has broad specificity at other positions. The sequence is that of Peptide deformylase from Salmonella typhi.